Here is a 250-residue protein sequence, read N- to C-terminus: Cellulose biosynthesis protein BcsQ (250 aa).

9–16 contributes to the ATP binding site; sequence VRGGVGTT.

This sequence belongs to the BcsQ family.

The protein resides in the cytoplasm. Essential for cellulose biosynthesis, shown for strain 1094, a commensal, natural cellulose producer. Also shown in strain W3110 which has a restored reading frame (TAG stop codon to TTG for amino acid 6, called strain AR3110), this protein. May play a role in subcellular localization of an active cellulose biosynthesis apparatus at the bacterial cell pole. The combination of cellulose and the curli fiber network confer cohesion, elasticity and tissue-like properties to colonies. This Escherichia coli (strain K12) protein is Cellulose biosynthesis protein BcsQ.